The chain runs to 256 residues: Hydroxyacylglutathione hydrolase (256 aa).

Residues His57, His59, Asp61, His62, His115, Asp134, and His172 each coordinate Zn(2+).

It belongs to the metallo-beta-lactamase superfamily. Glyoxalase II family. In terms of assembly, monomer. Zn(2+) serves as cofactor.

The enzyme catalyses an S-(2-hydroxyacyl)glutathione + H2O = a 2-hydroxy carboxylate + glutathione + H(+). It participates in secondary metabolite metabolism; methylglyoxal degradation; (R)-lactate from methylglyoxal: step 2/2. Thiolesterase that catalyzes the hydrolysis of S-D-lactoyl-glutathione to form glutathione and D-lactic acid. This Rhizobium etli (strain ATCC 51251 / DSM 11541 / JCM 21823 / NBRC 15573 / CFN 42) protein is Hydroxyacylglutathione hydrolase.